The sequence spans 460 residues: tRNA modification GTPase MnmE (460 aa).

Residues R22, E87, and R126 each coordinate (6S)-5-formyl-5,6,7,8-tetrahydrofolate. The 160-residue stretch at 222–381 folds into the TrmE-type G domain; it reads GLKTAIIGKP…LENTIYNLVF (160 aa). N232 provides a ligand contact to K(+). Residues 232 to 237, 251 to 257, and 276 to 279 contribute to the GTP site; these read NVGKSS, TDIPGTT, and DTAG. Mg(2+) is bound at residue S236. Positions 251, 253, and 256 each coordinate K(+). T257 contributes to the Mg(2+) binding site. K460 contacts (6S)-5-formyl-5,6,7,8-tetrahydrofolate.

It belongs to the TRAFAC class TrmE-Era-EngA-EngB-Septin-like GTPase superfamily. TrmE GTPase family. In terms of assembly, homodimer. Heterotetramer of two MnmE and two MnmG subunits. K(+) is required as a cofactor.

It is found in the cytoplasm. Functionally, exhibits a very high intrinsic GTPase hydrolysis rate. Involved in the addition of a carboxymethylaminomethyl (cmnm) group at the wobble position (U34) of certain tRNAs, forming tRNA-cmnm(5)s(2)U34. The polypeptide is tRNA modification GTPase MnmE (Thermoanaerobacter sp. (strain X514)).